We begin with the raw amino-acid sequence, 214 residues long: RNA-free ribonuclease P (214 aa).

This sequence belongs to the HARP family.

It catalyses the reaction Endonucleolytic cleavage of RNA, removing 5'-extranucleotides from tRNA precursor.. Its function is as follows. RNA-free RNase P that catalyzes the removal of the 5'-leader sequence from pre-tRNA to produce the mature 5'-terminus. The chain is RNA-free ribonuclease P from Aeropyrum pernix (strain ATCC 700893 / DSM 11879 / JCM 9820 / NBRC 100138 / K1).